Here is a 206-residue protein sequence, read N- to C-terminus: 2,3-bisphosphoglycerate-dependent phosphoglycerate mutase (206 aa).

Substrate-binding positions include 9 to 16, 22 to 23, arginine 61, 88 to 91, lysine 99, 115 to 116, and 159 to 160; these read RHGQSEWN, TG, ERDY, RR, and GN. Catalysis depends on histidine 10, which acts as the Tele-phosphohistidine intermediate. Residue glutamate 88 is the Proton donor/acceptor of the active site.

This sequence belongs to the phosphoglycerate mutase family. BPG-dependent PGAM subfamily. Homodimer.

It catalyses the reaction (2R)-2-phosphoglycerate = (2R)-3-phosphoglycerate. Its pathway is carbohydrate degradation; glycolysis; pyruvate from D-glyceraldehyde 3-phosphate: step 3/5. In terms of biological role, catalyzes the interconversion of 2-phosphoglycerate and 3-phosphoglycerate. The chain is 2,3-bisphosphoglycerate-dependent phosphoglycerate mutase from Azorhizobium caulinodans (strain ATCC 43989 / DSM 5975 / JCM 20966 / LMG 6465 / NBRC 14845 / NCIMB 13405 / ORS 571).